The primary structure comprises 131 residues: Large ribosomal subunit protein bL17 (131 aa).

The protein belongs to the bacterial ribosomal protein bL17 family. Part of the 50S ribosomal subunit. Contacts protein L32.

This Burkholderia mallei (strain NCTC 10229) protein is Large ribosomal subunit protein bL17.